Here is a 311-residue protein sequence, read N- to C-terminus: UDP-N-acetylenolpyruvoylglucosamine reductase (311 aa).

Positions 34–198 (MGGAADLFIT…LEGTFRLQKG (165 aa)) constitute an FAD-binding PCMH-type domain. Arginine 177 is a catalytic residue. The Proton donor role is filled by serine 227. Residue glutamate 297 is part of the active site.

This sequence belongs to the MurB family. FAD serves as cofactor.

It is found in the cytoplasm. It carries out the reaction UDP-N-acetyl-alpha-D-muramate + NADP(+) = UDP-N-acetyl-3-O-(1-carboxyvinyl)-alpha-D-glucosamine + NADPH + H(+). It functions in the pathway cell wall biogenesis; peptidoglycan biosynthesis. In terms of biological role, cell wall formation. The chain is UDP-N-acetylenolpyruvoylglucosamine reductase from Shouchella clausii (strain KSM-K16) (Alkalihalobacillus clausii).